Here is a 196-residue protein sequence, read N- to C-terminus: Molybdopterin synthase catalytic subunit (196 aa).

The interval 1 to 29 is disordered; it reads MSTLPSTDPPPLPASTSSQQPAVHIPPPS. Residues 145 to 146, Lys161, and 168 to 170 contribute to the substrate site; these read HR and KRE. Residues 174–196 are disordered; sequence GEPPGQGEWRANRDTDPEGKSTS. The span at 183 to 196 shows a compositional bias: basic and acidic residues; that stretch reads RANRDTDPEGKSTS.

The protein belongs to the MoaE family. MOCS2B subfamily. In terms of assembly, heterotetramer; composed of 2 small (MOCS2A) and 2 large (MOCS2B) subunits.

It is found in the cytoplasm. It catalyses the reaction 2 [molybdopterin-synthase sulfur-carrier protein]-C-terminal-Gly-aminoethanethioate + cyclic pyranopterin phosphate + H2O = molybdopterin + 2 [molybdopterin-synthase sulfur-carrier protein]-C-terminal Gly-Gly + 2 H(+). It functions in the pathway cofactor biosynthesis; molybdopterin biosynthesis. Its function is as follows. Catalytic subunit of the molybdopterin synthase complex, a complex that catalyzes the conversion of precursor Z into molybdopterin. Acts by mediating the incorporation of 2 sulfur atoms from thiocarboxylated MOCS2A into precursor Z to generate a dithiolene group. The chain is Molybdopterin synthase catalytic subunit from Coccidioides immitis (strain RS) (Valley fever fungus).